Consider the following 122-residue polypeptide: Large ribosomal subunit protein uL14 (122 aa).

Belongs to the universal ribosomal protein uL14 family. As to quaternary structure, part of the 50S ribosomal subunit. Forms a cluster with proteins L3 and L19. In the 70S ribosome, L14 and L19 interact and together make contacts with the 16S rRNA in bridges B5 and B8.

Its function is as follows. Binds to 23S rRNA. Forms part of two intersubunit bridges in the 70S ribosome. The sequence is that of Large ribosomal subunit protein uL14 from Streptococcus equi subsp. equi (strain 4047).